Here is a 223-residue protein sequence, read N- to C-terminus: Triosephosphate isomerase (223 aa).

A substrate-binding site is contributed by 6–8; it reads NLK. H86 functions as the Electrophile in the catalytic mechanism. E151 functions as the Proton acceptor in the catalytic mechanism. Positions 157 and 187 each coordinate substrate.

The protein belongs to the triosephosphate isomerase family. As to quaternary structure, homodimer.

The protein resides in the cytoplasm. The catalysed reaction is D-glyceraldehyde 3-phosphate = dihydroxyacetone phosphate. It functions in the pathway carbohydrate biosynthesis; gluconeogenesis. Its pathway is carbohydrate degradation; glycolysis; D-glyceraldehyde 3-phosphate from glycerone phosphate: step 1/1. Involved in the gluconeogenesis. Catalyzes stereospecifically the conversion of dihydroxyacetone phosphate (DHAP) to D-glyceraldehyde-3-phosphate (G3P). This is Triosephosphate isomerase from Campylobacter jejuni subsp. doylei (strain ATCC BAA-1458 / RM4099 / 269.97).